The primary structure comprises 121 residues: Small ribosomal subunit protein uS13 (121 aa).

The interval 91–121 (HRRGLPVRGQNTKNNARTRKGPSKTVAGKKK) is disordered. The segment covering 106 to 121 (ARTRKGPSKTVAGKKK) has biased composition (basic residues).

Belongs to the universal ribosomal protein uS13 family. Part of the 30S ribosomal subunit. Forms a loose heterodimer with protein S19. Forms two bridges to the 50S subunit in the 70S ribosome.

Its function is as follows. Located at the top of the head of the 30S subunit, it contacts several helices of the 16S rRNA. In the 70S ribosome it contacts the 23S rRNA (bridge B1a) and protein L5 of the 50S subunit (bridge B1b), connecting the 2 subunits; these bridges are implicated in subunit movement. Contacts the tRNAs in the A and P-sites. The sequence is that of Small ribosomal subunit protein uS13 from Listeria welshimeri serovar 6b (strain ATCC 35897 / DSM 20650 / CCUG 15529 / CIP 8149 / NCTC 11857 / SLCC 5334 / V8).